A 147-amino-acid polypeptide reads, in one-letter code: MVHWTAEEKQLITGLWGKVNVADCGAEALARLLIVYPWTQRFFASFGNLSSPTAILGNPMVRAHGKKVLTSFGDAVKNLDNIKNTFAQLSELHCDKLHVDPENFRLLGDILIIVLAAHFTKDFTPDCQAAWQKLVRVVAHALARKYH.

One can recognise a Globin domain in the interval 3 to 147; the sequence is HWTAEEKQLI…VAHALARKYH (145 aa). Residues His64 and His93 each coordinate heme b.

Belongs to the globin family. As to quaternary structure, heterotetramer of two alpha chains and two beta chains. In terms of tissue distribution, red blood cells.

Functionally, involved in oxygen transport from the lung to the various peripheral tissues. The chain is Hemoglobin subunit beta (HBB) from Cairina moschata (Muscovy duck).